Consider the following 3061-residue polypeptide: Genome polyprotein (3061 aa).

In terms of domain architecture, Peptidase S30 spans 141-284 (KLTEGQMNHL…QGVMDSMVQF (144 aa)). Catalysis depends on for P1 proteinase activity residues histidine 192, aspartate 201, and serine 235. Positions 334–337 (KITC) match the Involved in interaction with stylet and aphid transmission motif. The short motif at 592–594 (PTK) is the Involved in virions binding and aphid transmission element. A Peptidase C6 domain is found at 618-740 (LYIARQGFCY…ESDIKHYRVG (123 aa)). Residues cysteine 626 and histidine 699 each act as for helper component proteinase activity in the active site. The Helicase ATP-binding domain maps to 1229-1381 (DIAHSEHLDF…TQQPVKLIVE (153 aa)). 1242–1249 (GAVGSGKS) contributes to the ATP binding site. A DECH box motif is present at residues 1331-1334 (DECH). The Helicase C-terminal domain maps to 1400–1559 (DVVQFGSNVL…NLPVMTGGVS (160 aa)). Residues 1884–1892 (RKKGKGKGT) carry the Nuclear localization signal motif. Tyrosine 1907 bears the O-(5'-phospho-RNA)-tyrosine mark. The region spanning 2032–2250 (AKSLMRGLRD…VLWGPLKLKE (219 aa)) is the Peptidase C4 domain. Active-site for nuclear inclusion protein A activity residues include histidine 2077, aspartate 2112, and cysteine 2182. The RdRp catalytic domain occupies 2517 to 2641 (WVYCDADGSQ…AVNPEKESIL (125 aa)). The disordered stretch occupies residues 2795-2835 (GNDTIDAGGSTKKDAKQEQGSIQPNLNKEKEKDVNVGTSGT). At threonine 3044 the chain carries Phosphothreonine.

Belongs to the potyviridae genome polyprotein family. In terms of assembly, interacts with host eIF4E protein (via cap-binding region); this interaction mediates the translation of the VPg-viral RNA conjugates. Part of a complex that comprises VPg, RNA, host EIF4E and EIF4G; this interaction mediates the translation of the VPg-viral RNA conjugates. Post-translationally, VPg is uridylylated by the polymerase and is covalently attached to the 5'-end of the genomic RNA. This uridylylated form acts as a nucleotide-peptide primer for the polymerase. Potyviral RNA is expressed as two polyproteins which undergo post-translational proteolytic processing. Genome polyprotein is processed by NIa-pro, P1 and HC-pro proteinases resulting in the production of at least ten individual proteins. P3N-PIPO polyprotein is cleaved by P1 and HC-pro proteinases resulting in the production of three individual proteins. The P1 proteinase and the HC-pro cleave only their respective C-termini autocatalytically. 6K1 is essential for proper proteolytic separation of P3 from CI.

The protein localises to the host cytoplasmic vesicle. Its subcellular location is the host nucleus. The protein resides in the virion. It carries out the reaction RNA(n) + a ribonucleoside 5'-triphosphate = RNA(n+1) + diphosphate. It catalyses the reaction Hydrolyzes glutaminyl bonds, and activity is further restricted by preferences for the amino acids in P6 - P1' that vary with the species of potyvirus, e.g. Glu-Xaa-Xaa-Tyr-Xaa-Gln-|-(Ser or Gly) for the enzyme from tobacco etch virus. The natural substrate is the viral polyprotein, but other proteins and oligopeptides containing the appropriate consensus sequence are also cleaved.. The enzyme catalyses Hydrolyzes a Gly-|-Gly bond at its own C-terminus, commonly in the sequence -Tyr-Xaa-Val-Gly-|-Gly, in the processing of the potyviral polyprotein.. Functionally, required for aphid transmission and also has proteolytic activity. Only cleaves a Gly-Gly dipeptide at its own C-terminus. Interacts with virions and aphid stylets. Acts as a suppressor of RNA-mediated gene silencing, also known as post-transcriptional gene silencing (PTGS), a mechanism of plant viral defense that limits the accumulation of viral RNAs. May have RNA-binding activity. In terms of biological role, has helicase activity. It may be involved in replication. Its function is as follows. Indispensable for virus replication. Reduces the abundance of host transcripts related to jasmonic acid biosynthesis therefore altering the host defenses. In order to increase its own stability, decreases host protein degradation pathways. Indispensable for virus replication. Functionally, mediates the cap-independent, EIF4E-dependent translation of viral genomic RNAs. Binds to the cap-binding site of host EIF4E and thus interferes with the host EIF4E-dependent mRNA export and translation. VPg-RNA directly binds EIF4E and is a template for transcription. Also forms trimeric complexes with EIF4E-EIF4G, which are templates for translation. In terms of biological role, has RNA-binding and proteolytic activities. Its function is as follows. An RNA-dependent RNA polymerase that plays an essential role in the virus replication. Involved in aphid transmission, cell-to-cell and systemis movement, encapsidation of the viral RNA and in the regulation of viral RNA amplification. In Potato virus Y (strain Hungarian) (PVY), this protein is Genome polyprotein.